Reading from the N-terminus, the 443-residue chain is Chromosomal replication initiator protein DnaA (443 aa).

Positions 1–80 are domain I, interacts with DnaA modulators; the sequence is MTSQFASLWQ…LGESVEVRFF (80 aa). The segment at 80–104 is domain II; sequence FTPSADSRRSEPSRRPVATEESSPP. Residues 83 to 105 are disordered; that stretch reads SADSRRSEPSRRPVATEESSPPL. The segment covering 85 to 97 has biased composition (basic and acidic residues); it reads DSRRSEPSRRPVA. The domain III, AAA+ region stretch occupies residues 105–321; sequence LLNPKYTFDT…GALNRVIAYA (217 aa). Residues glycine 149, glycine 151, lysine 152, and threonine 153 each coordinate ATP. The tract at residues 322–443 is domain IV, binds dsDNA; that stretch reads NLSGKSLTSE…QVLKEKIQRA (122 aa).

It belongs to the DnaA family. As to quaternary structure, oligomerizes as a right-handed, spiral filament on DNA at oriC.

The protein localises to the cytoplasm. Functionally, plays an essential role in the initiation and regulation of chromosomal replication. ATP-DnaA binds to the origin of replication (oriC) to initiate formation of the DNA replication initiation complex once per cell cycle. Binds the DnaA box (a 9 base pair repeat at the origin) and separates the double-stranded (ds)DNA. Forms a right-handed helical filament on oriC DNA; dsDNA binds to the exterior of the filament while single-stranded (ss)DNA is stabiized in the filament's interior. The ATP-DnaA-oriC complex binds and stabilizes one strand of the AT-rich DNA unwinding element (DUE), permitting loading of DNA polymerase. After initiation quickly degrades to an ADP-DnaA complex that is not apt for DNA replication. Binds acidic phospholipids. The polypeptide is Chromosomal replication initiator protein DnaA (Heliobacterium modesticaldum (strain ATCC 51547 / Ice1)).